The chain runs to 109 residues: MEVKAIHRGARISAQKTRLVADQIRGLPIERALNVLAFSPKKAAVIVKKVVESAIANAEHNEGADIDELKVKSIYIDKATSLKRFTARAKGRGNRIEKQTCHITVTLGN.

Belongs to the universal ribosomal protein uL22 family. Part of the 50S ribosomal subunit.

In terms of biological role, this protein binds specifically to 23S rRNA; its binding is stimulated by other ribosomal proteins, e.g. L4, L17, and L20. It is important during the early stages of 50S assembly. It makes multiple contacts with different domains of the 23S rRNA in the assembled 50S subunit and ribosome. Functionally, the globular domain of the protein is located near the polypeptide exit tunnel on the outside of the subunit, while an extended beta-hairpin is found that lines the wall of the exit tunnel in the center of the 70S ribosome. The protein is Large ribosomal subunit protein uL22 of Ralstonia nicotianae (strain ATCC BAA-1114 / GMI1000) (Ralstonia solanacearum).